The primary structure comprises 188 residues: UPF0157 protein VC_A0354 (188 aa).

Belongs to the UPF0157 (GrpB) family.

The polypeptide is UPF0157 protein VC_A0354 (Vibrio cholerae serotype O1 (strain ATCC 39315 / El Tor Inaba N16961)).